A 245-amino-acid polypeptide reads, in one-letter code: Thiopurine S-methyltransferase (245 aa).

Residue 29–40 coordinates S-adenosyl-L-methionine; the sequence is WQEKWVSRRIGF. Phe-40 provides a ligand contact to substrate. Lys-58 bears the N6-acetyllysine mark. S-adenosyl-L-methionine is bound by residues Leu-69, Glu-90, and Arg-152.

Belongs to the class I-like SAM-binding methyltransferase superfamily. TPMT family. In terms of assembly, monomer.

The protein resides in the cytoplasm. It catalyses the reaction S-adenosyl-L-methionine + a thiopurine = S-adenosyl-L-homocysteine + a thiopurine S-methylether.. The protein is Thiopurine S-methyltransferase (TPMT) of Lycaon pictus (African wild dog).